The primary structure comprises 100 residues: Urease subunit gamma (100 aa).

It belongs to the urease gamma subunit family. As to quaternary structure, heterotrimer of UreA (gamma), UreB (beta) and UreC (alpha) subunits. Three heterotrimers associate to form the active enzyme.

Its subcellular location is the cytoplasm. It carries out the reaction urea + 2 H2O + H(+) = hydrogencarbonate + 2 NH4(+). Its pathway is nitrogen metabolism; urea degradation; CO(2) and NH(3) from urea (urease route): step 1/1. The polypeptide is Urease subunit gamma (Picosynechococcus sp. (strain ATCC 27264 / PCC 7002 / PR-6) (Agmenellum quadruplicatum)).